The following is a 169-amino-acid chain: Gastrula zinc finger protein XlCGF62.1 (169 aa).

C2H2-type zinc fingers lie at residues 6–28, 34–56, 62–84, 90–113, 119–141, and 147–169; these read FICT…IRTH, FICT…YKTH, FICT…HRSH, FTCT…QAIH, FICT…KRTH, and FVCT…KRTH.

It belongs to the krueppel C2H2-type zinc-finger protein family.

Its subcellular location is the nucleus. In terms of biological role, may be involved in transcriptional regulation. The protein is Gastrula zinc finger protein XlCGF62.1 of Xenopus laevis (African clawed frog).